Reading from the N-terminus, the 146-residue chain is MLLQGTHRIGRMAMLLALADESESSVLSIPKGWKYCTGKVGSMNSQKVVAAMETAAKSNQVIETDVYRETHALYHAIMEALYGVTRGQIQLADVLRTVGLRFAIVRGTPYDGKKEGEWVAVALYGTIGAPVKGSEHEAIGLGINHI.

It belongs to the HutP family. As to quaternary structure, homohexamer.

Antiterminator that binds to cis-acting regulatory sequences on the mRNA in the presence of histidine, thereby suppressing transcription termination and activating the hut operon for histidine utilization. In Bacillus cytotoxicus (strain DSM 22905 / CIP 110041 / 391-98 / NVH 391-98), this protein is Hut operon positive regulatory protein.